The chain runs to 197 residues: Small ribosomal subunit protein uS5 (197 aa).

The segment covering 1–17 has biased composition (basic and acidic residues); that stretch reads MAERENRGRGRGRNREE. 2 disordered regions span residues 1–22 and 158–197; these read MAER…TPEF and NESS…SEEA. Residues 22–85 form the S5 DRBM domain; it reads FADRLVAINR…EQAKRQLIRV (64 aa). Residues 172–186 show a composition bias toward basic and acidic residues; sequence KVADILPKRDDHPQI.

Belongs to the universal ribosomal protein uS5 family. In terms of assembly, part of the 30S ribosomal subunit. Contacts proteins S4 and S8.

In terms of biological role, with S4 and S12 plays an important role in translational accuracy. Its function is as follows. Located at the back of the 30S subunit body where it stabilizes the conformation of the head with respect to the body. The sequence is that of Small ribosomal subunit protein uS5 from Jannaschia sp. (strain CCS1).